We begin with the raw amino-acid sequence, 274 residues long: Nitrogenase iron protein (274 aa).

Residue 8 to 15 coordinates ATP; sequence GKGGIGKS. [4Fe-4S] cluster is bound at residue Cys94. Arg97 carries the post-translational modification ADP-ribosylarginine; by dinitrogenase reductase ADP-ribosyltransferase. Cys131 contacts [4Fe-4S] cluster.

It belongs to the NifH/BchL/ChlL family. As to quaternary structure, homodimer. The cofactor is [4Fe-4S] cluster. The reversible ADP-ribosylation of Arg-97 inactivates the nitrogenase reductase and regulates nitrogenase activity.

The catalysed reaction is N2 + 8 reduced [2Fe-2S]-[ferredoxin] + 16 ATP + 16 H2O = H2 + 8 oxidized [2Fe-2S]-[ferredoxin] + 2 NH4(+) + 16 ADP + 16 phosphate + 6 H(+). In terms of biological role, the key enzymatic reactions in nitrogen fixation are catalyzed by the nitrogenase complex, which has 2 components: the iron protein and the molybdenum-iron protein. The protein is Nitrogenase iron protein of Chlorobium phaeobacteroides (strain BS1).